The primary structure comprises 543 residues: Gap junction alpha-10 protein (543 aa).

Residues 1–16 (MGDWNLLGGILEEVHS) lie on the Cytoplasmic side of the membrane. Residues 17 to 37 (HSTIVGKIWLTILFIFRMLVL) form a helical membrane-spanning segment. The Extracellular portion of the chain corresponds to 38–76 (RVAAEDVWDDEQSAFACNTRQPGCNNICYDDAFPISLIR). Residues 77 to 97 (FWVLQIIFVSSPSLVYMGHAL) form a helical membrane-spanning segment. Over 98–165 (YRLRAFEKDR…TYVLHILTRS (68 aa)) the chain is Cytoplasmic. The helical transmembrane segment at 166–186 (VLEVGFMIGQYILYGFQMHPL) threads the bilayer. Over 187–209 (YKCTQPPCPNAVDCFVSRPTEKT) the chain is Extracellular. Residues 210–230 (IFMLFMHSIAAISLLLNILEI) form a helical membrane-spanning segment. The Cytoplasmic segment spans residues 231–543 (FHLGIRKIMR…HSIHSVKFNS (313 aa)). 2 disordered regions span residues 306–359 (PQPR…SSFG) and 379–424 (PSFA…DRSR). Basic and acidic residues predominate over residues 317 to 328 (NGKKDWSEKDQH). A compositionally biased stretch (polar residues) spans 344 to 359 (AGNQHLGQQSDHSSFG). Basic and acidic residues predominate over residues 400–413 (TDLHSHCRDSEGSM).

Belongs to the connexin family. Alpha-type (group II) subfamily. As to quaternary structure, a connexon is composed of a hexamer of connexins. Expressed in skeletal muscle and heart.

Its subcellular location is the cell membrane. The protein resides in the cell junction. It is found in the gap junction. One gap junction consists of a cluster of closely packed pairs of transmembrane channels, the connexons, through which materials of low MW diffuse from one cell to a neighboring cell. Involved in tracer coupling between horizontal cells of the retina. May play a role in the regulation of horizontal cell patterning. In Homo sapiens (Human), this protein is Gap junction alpha-10 protein (GJA10).